We begin with the raw amino-acid sequence, 120 residues long: Immunoglobulin lambda variable 4-60 (120 aa).

An N-terminal signal peptide occupies residues 1–21; sequence MAWTPLLLLFPLLLHCTGSLS. The segment at 22–46 is framework-1; the sequence is QPVLTQSSSASASLGSSVKLTCTLS. The Ig-like domain maps to 23–120; sequence PVLTQSSSAS…YYCETWDSNT (98 aa). A disulfide bridge connects residues Cys43 and Cys113. The complementarity-determining-1 stretch occupies residues 47-53; that stretch reads SGHSSYI. The framework-2 stretch occupies residues 54 to 70; the sequence is IAWHQQQPGKAPRYLMK. The tract at residues 71 to 77 is complementarity-determining-2; that stretch reads LEGSGSY. A framework-3 region spans residues 78-113; that stretch reads NKGSGVPDRFSGSSSGADRYLTISNLQFEDEADYYC. The tract at residues 114-120 is complementarity-determining-3; the sequence is ETWDSNT.

Immunoglobulins are composed of two identical heavy chains and two identical light chains; disulfide-linked.

It is found in the secreted. The protein resides in the cell membrane. In terms of biological role, v region of the variable domain of immunoglobulin light chains that participates in the antigen recognition. Immunoglobulins, also known as antibodies, are membrane-bound or secreted glycoproteins produced by B lymphocytes. In the recognition phase of humoral immunity, the membrane-bound immunoglobulins serve as receptors which, upon binding of a specific antigen, trigger the clonal expansion and differentiation of B lymphocytes into immunoglobulins-secreting plasma cells. Secreted immunoglobulins mediate the effector phase of humoral immunity, which results in the elimination of bound antigens. The antigen binding site is formed by the variable domain of one heavy chain, together with that of its associated light chain. Thus, each immunoglobulin has two antigen binding sites with remarkable affinity for a particular antigen. The variable domains are assembled by a process called V-(D)-J rearrangement and can then be subjected to somatic hypermutations which, after exposure to antigen and selection, allow affinity maturation for a particular antigen. The chain is Immunoglobulin lambda variable 4-60 from Homo sapiens (Human).